A 127-amino-acid chain; its full sequence is Protein translocase subunit SecE (127 aa).

Helical transmembrane passes span 16–36 (IAKW…NHYY), 42–62 (IFQN…IFLT), and 98–118 (IIVT…LIWF).

It belongs to the SecE/SEC61-gamma family. As to quaternary structure, component of the Sec protein translocase complex. Heterotrimer consisting of SecY, SecE and SecG subunits. The heterotrimers can form oligomers, although 1 heterotrimer is thought to be able to translocate proteins. Interacts with the ribosome. Interacts with SecDF, and other proteins may be involved. Interacts with SecA.

Its subcellular location is the cell membrane. Its function is as follows. Essential subunit of the Sec protein translocation channel SecYEG. Clamps together the 2 halves of SecY. May contact the channel plug during translocation. The polypeptide is Protein translocase subunit SecE (Buchnera aphidicola subsp. Baizongia pistaciae (strain Bp)).